The following is a 466-amino-acid chain: Soluble pyridine nucleotide transhydrogenase (466 aa).

FAD is bound at residue 36–45 (ERYHNVGGGC).

It belongs to the class-I pyridine nucleotide-disulfide oxidoreductase family. It depends on FAD as a cofactor.

The protein localises to the cytoplasm. The enzyme catalyses NAD(+) + NADPH = NADH + NADP(+). Functionally, conversion of NADPH, generated by peripheral catabolic pathways, to NADH, which can enter the respiratory chain for energy generation. In Salmonella paratyphi C (strain RKS4594), this protein is Soluble pyridine nucleotide transhydrogenase.